A 150-amino-acid polypeptide reads, in one-letter code: Large ribosomal subunit protein bL9 (150 aa).

Belongs to the bacterial ribosomal protein bL9 family.

Its function is as follows. Binds to the 23S rRNA. This is Large ribosomal subunit protein bL9 from Variovorax paradoxus (strain S110).